Reading from the N-terminus, the 675-residue chain is Protein PALS1 (675 aa).

Residues 1-78 are disordered; that stretch reads MTTSHMNGHV…RREEEGKKQE (78 aa). The tract at residues 1–345 is required for the correct localization of PALS1 and PATJ at cell-cell contacts and the normal formation of tight junctions and adherens junctions; it reads MTTSHMNGHV…QQIKPPPAKE (345 aa). 2 stretches are compositionally biased toward basic and acidic residues: residues 10-36 and 54-78; these read VTEESDNEVKNVDLASPEEHQKHREMA and AQLERIRQQQEDMRRRREEEGKKQE. A phosphoserine mark is found at serine 14 and serine 25. Positions 21-140 are interaction with PARD6B; it reads VDLASPEEHQ…LKHIQHTLVD (120 aa). Phosphoserine occurs at positions 83 and 84. L27 domains follow at residues 120-177 and 179-235; these read KILE…NKAS and PFPL…MQLE. The tract at residues 181-243 is interaction with LIN7C; that stretch reads PLISNAQDLA…LEPFTDERVY (63 aa). The 81-residue stretch at 256–336 folds into the PDZ domain; that stretch reads IVRIEKARDI…TLTFVLIPSQ (81 aa). Residues 345–417 enclose the SH3 domain; it reads ETVIHVKAHF…PGKSFQQQRE (73 aa). Positions 479-660 constitute a Guanylate kinase-like domain; sequence KRPIILIGPQ…AYQELLRLIN (182 aa). 486-493 serves as a coordination point for ATP; the sequence is GPQNCGQN.

The protein belongs to the MAGUK family. Heterodimer with MPP1. Forms a heterotrimeric complex composed of PALS1, LIN7B and PATJ; the N-terminal L27 domain of PALS1 interacts with the L27 domain of PATJ and the C-terminal L27 domain of PALS1 interacts with the L27 domain of LIN7B. Component of a complex composed of PALS1, CRB1 and MPP4. Component of a complex whose core is composed of ARHGAP17, AMOT, PALS1, PATJ and PARD3/PAR3. Component of a complex composed of PALS1, CRB1 and EPB41L5. Within the complex, interacts (via HOOK domain) with EPB41L5 (via FERM domain), and interacts with CRB1 (via intracellular domain). Component of a complex composed of PALS1, MPP3 and CRB1; PALS1 acts as a bridging protein between MPP3 (via guanylate kinase-like domain) and CRB1. Component of a complex composed of CRB3, PALS1 and PATJ. As part of the Crumbs complex; interacts with WWP1, the interaction is enhanced by AMOTL2 and facilitates WWP1 localization to the plasma membrane. The Crumbs complex promotes monoubiquitination of AMOTL2 by WWP1, which activates the Hippo signaling pathway. Interacts (via PDZ domain) with PATJ (via N-terminus). Interacts with EZR. Interacts (via PDZ domain) with CRB1 (via C-terminal ERLI motif). While the PDZ domain is sufficient for interaction with CRB1, the adjacent SH3 and guanylate kinase-like domains are likely to contribute to a high affinity interaction. Interacts with WWTR1/TAZ (via WW domain). Interacts with MPP7. Interacts (via PDZ domain) with CRB3 (via C-terminus). Interacts with LIN7C. Interacts with MPDZ. Interacts with PARD6B. Interacts with SC6A1. Interacts with CDH5; the interaction promotes PALS1 localization to cell junctions and is required for CDH5-mediated vascular lumen formation and endothelial cell. Interacts with NPHP1 (via coiled coil and SH3 domains). Interacts with NPHP4. Interacts with CRB2.

Its subcellular location is the golgi apparatus. The protein localises to the cell membrane. It is found in the endomembrane system. The protein resides in the cell junction. It localises to the tight junction. Its subcellular location is the adherens junction. The protein localises to the cell projection. It is found in the axon. The protein resides in the perikaryon. It localises to the apical cell membrane. In terms of biological role, plays a role in tight junction biogenesis and in the establishment of cell polarity in epithelial cells. Also involved in adherens junction biogenesis by ensuring correct localization of the exocyst complex protein EXOC4/SEC8 which allows trafficking of adherens junction structural component CDH1 to the cell surface. Plays a role through its interaction with CDH5 in vascular lumen formation and endothelial membrane polarity. Required during embryonic and postnatal retinal development. Required for the maintenance of cerebellar progenitor cells in an undifferentiated proliferative state, preventing premature differentiation, and is required for cerebellar histogenesis, fissure formation, cerebellar layer organization and cortical development. Plays a role in neuronal progenitor cell survival, potentially via promotion of mTOR signaling. Plays a role in the radial and longitudinal extension of the myelin sheath in Schwann cells. May modulate SC6A1/GAT1-mediated GABA uptake by stabilizing the transporter. May play a role in the T-cell receptor-mediated activation of NF-kappa-B. Required for localization of EZR to the apical membrane of parietal cells and may play a role in the dynamic remodeling of the apical cytoskeleton. Required for the normal polarized localization of the vesicular marker STX4. Required for the correct trafficking of the myelin proteins PMP22 and MAG. Involved in promoting phosphorylation and cytoplasmic retention of transcriptional coactivators YAP1 and WWTR1/TAZ which leads to suppression of TGFB1-dependent transcription of target genes such as CCN2/CTGF, SERPINE1/PAI1, SNAI1/SNAIL1 and SMAD7. The chain is Protein PALS1 from Canis lupus familiaris (Dog).